The sequence spans 156 residues: MNINLTLIGQAIAFAIFVAFCMKFVWPPLINAISERQRKIADGLNAAEKAKADLADAQAQVKQELDAAKAQAAQLIEQANRRAAQLIEEARTQATAEGERIRQQSKETVDQEINAAREELRQQVAALAVDGAEKILNQQVDQQAHAAMLEQLAAKL.

A helical transmembrane segment spans residues 5-25 (LTLIGQAIAFAIFVAFCMKFV).

It belongs to the ATPase B chain family. As to quaternary structure, F-type ATPases have 2 components, F(1) - the catalytic core - and F(0) - the membrane proton channel. F(1) has five subunits: alpha(3), beta(3), gamma(1), delta(1), epsilon(1). F(0) has three main subunits: a(1), b(2) and c(10-14). The alpha and beta chains form an alternating ring which encloses part of the gamma chain. F(1) is attached to F(0) by a central stalk formed by the gamma and epsilon chains, while a peripheral stalk is formed by the delta and b chains.

Its subcellular location is the cell inner membrane. Its function is as follows. F(1)F(0) ATP synthase produces ATP from ADP in the presence of a proton or sodium gradient. F-type ATPases consist of two structural domains, F(1) containing the extramembraneous catalytic core and F(0) containing the membrane proton channel, linked together by a central stalk and a peripheral stalk. During catalysis, ATP synthesis in the catalytic domain of F(1) is coupled via a rotary mechanism of the central stalk subunits to proton translocation. In terms of biological role, component of the F(0) channel, it forms part of the peripheral stalk, linking F(1) to F(0). The sequence is that of ATP synthase subunit b from Acinetobacter baylyi (strain ATCC 33305 / BD413 / ADP1).